The primary structure comprises 924 residues: Alpha-actinin, sarcomeric (924 aa).

An actin-binding region spans residues 1-250; the sequence is MMMENGLSME…IMTYVSCYYH (250 aa). Calponin-homology (CH) domains are found at residues 34–138 and 147–253; these read KQQK…LRFA and MTAK…HAFQ. 4 Spectrin repeats span residues 251 to 395, 396 to 510, 511 to 631, and 632 to 744; these read AFQG…TVSD, ISNS…RCQR, ICDQ…TAND, and MTRK…TMET. 2 EF-hand domains span residues 778–813 and 819–854; these read EQLN…LGYS and QGDL…ESTD. Residues Asp-791, Asn-793, Thr-795, Arg-797, and Glu-802 each contribute to the Ca(2+) site.

It belongs to the alpha-actinin family. Homodimer; antiparallel. Interacts with Smn; the interaction occurs in adult thoracic tissues. In terms of tissue distribution, larval muscle isoform is expressed in the larval body wall, adult muscles of the head and abdomen and supercontractile muscles of the larva and adult. Adult muscle isoform accumulates within adult fibrillar and tubular muscles.

Its subcellular location is the cytoplasm. It is found in the myofibril. The protein localises to the sarcomere. It localises to the z line. Functionally, F-actin cross-linking protein which is thought to anchor actin to a variety of intracellular structures. This is a bundling protein. The chain is Alpha-actinin, sarcomeric (Actn) from Drosophila melanogaster (Fruit fly).